The chain runs to 867 residues: Piwi-like protein 1 (867 aa).

The segment covering 1-11 has biased composition (basic residues); the sequence is MTGRARARARG. The segment at 1–70 is disordered; it reads MTGRARARAR…QRGPQDAPKT (70 aa). The span at 28 to 44 shows a compositional bias: polar residues; it reads AQKTLPSHPSEQRQSLQ. The PAZ domain occupies 286-397; sequence TVLDFMYSLY…LIPELCYLTG (112 aa). The segment at 324–326 is required for binding 2'-O-methylated 3'-end of piRNAs; the sequence is TYR. The tract at residues 485-621 is MID region; that stretch reads SRETRVAPLI…LQMNCKMGGE (137 aa). A Piwi domain is found at 561–853; it reads IVVCILSSTR…LAFLVGQSIH (293 aa). Active-site residues include aspartate 638, glutamate 676, aspartate 708, and histidine 842.

The protein belongs to the argonaute family. Piwi subfamily. Mg(2+) serves as cofactor. In terms of processing, methylated on arginine residues; required for the interaction with Tudor domain-containing protein and subsequent localization to the meiotic nuage, also named P granule.

The protein localises to the cytoplasm. Endoribonuclease that plays a central role in postnatal germ cells by repressing transposable elements and preventing their mobilization, which is essential for the germline integrity. Acts via the piRNA metabolic process, which mediates the repression of transposable elements during meiosis by forming complexes composed of piRNAs and Piwi proteins and govern the methylation and subsequent repression of transposons. Directly binds methylated piRNAs, a class of 24 to 30 nucleotide RNAs that are generated by a Dicer-independent mechanism and are primarily derived from transposons and other repeated sequence elements. Strongly prefers a uridine in the first position of their guide (g1U preference, also named 1U-bias). Besides their function in transposable elements repression, piRNAs are probably involved in other processes during meiosis such as translation regulation. Not involved in the piRNA amplification loop, also named ping-pong amplification cycle. Acts as an endoribonuclease that cleaves transposon messenger RNAs. The polypeptide is Piwi-like protein 1 (PIWIL1) (Gallus gallus (Chicken)).